The primary structure comprises 496 residues: uncharacterized protein (496 aa).

Transmembrane regions (helical) follow at residues 33–53, 89–109, 127–147, 154–174, 193–213, 247–267, 285–305, 320–340, 355–375, 382–402, 411–431, and 455–475; these read FLKG…LIFA, LNFL…YTLI, PWFV…FTFF, VFNL…YEIF, LIIA…TPLV, IILI…NTNF, LWFI…VFAY, LWVY…YMVF, LLNL…VTLF, SLIN…IYIF, LLVL…IVGF, and VQIM…YLTI.

Its subcellular location is the cell membrane. This is an uncharacterized protein from Ureaplasma parvum serovar 3 (strain ATCC 700970).